Reading from the N-terminus, the 256-residue chain is Post-translational flagellin modification protein A (256 aa).

Ser-145 is a binding site for substrate. The active-site Proton acceptor is Tyr-168.

Belongs to the short-chain dehydrogenases/reductases (SDR) family.

In terms of biological role, required for biosynthesis of LAH modification in the post-translational modification of Campylobacter coli flagellin. This chain is Post-translational flagellin modification protein A (ptmA), found in Campylobacter coli.